Reading from the N-terminus, the 490-residue chain is Bifunctional protein HldE (490 aa).

The segment at 1–330 (MDRTNIENFL…EAMAHHALEY (330 aa)) is ribokinase. 205-208 (NRKE) is an ATP binding site. The active site involves Asp275. The segment at 356–490 (FTNGCFDLLH…ERILDRYEQG (135 aa)) is cytidylyltransferase.

The protein in the N-terminal section; belongs to the carbohydrate kinase PfkB family. It in the C-terminal section; belongs to the cytidylyltransferase family. Homodimer.

It catalyses the reaction D-glycero-beta-D-manno-heptose 7-phosphate + ATP = D-glycero-beta-D-manno-heptose 1,7-bisphosphate + ADP + H(+). The enzyme catalyses D-glycero-beta-D-manno-heptose 1-phosphate + ATP + H(+) = ADP-D-glycero-beta-D-manno-heptose + diphosphate. The protein operates within nucleotide-sugar biosynthesis; ADP-L-glycero-beta-D-manno-heptose biosynthesis; ADP-L-glycero-beta-D-manno-heptose from D-glycero-beta-D-manno-heptose 7-phosphate: step 1/4. It functions in the pathway nucleotide-sugar biosynthesis; ADP-L-glycero-beta-D-manno-heptose biosynthesis; ADP-L-glycero-beta-D-manno-heptose from D-glycero-beta-D-manno-heptose 7-phosphate: step 3/4. Catalyzes the phosphorylation of D-glycero-D-manno-heptose 7-phosphate at the C-1 position to selectively form D-glycero-beta-D-manno-heptose-1,7-bisphosphate. Functionally, catalyzes the ADP transfer from ATP to D-glycero-beta-D-manno-heptose 1-phosphate, yielding ADP-D-glycero-beta-D-manno-heptose. This chain is Bifunctional protein HldE, found in Syntrophotalea carbinolica (strain DSM 2380 / NBRC 103641 / GraBd1) (Pelobacter carbinolicus).